Reading from the N-terminus, the 205-residue chain is Large ribosomal subunit protein uL18 (205 aa).

Belongs to the universal ribosomal protein uL18 family. As to quaternary structure, part of the 50S ribosomal subunit. Contacts the 5S and 23S rRNAs.

This is one of the proteins that bind and probably mediate the attachment of the 5S RNA into the large ribosomal subunit, where it forms part of the central protuberance. The sequence is that of Large ribosomal subunit protein uL18 from Pyrobaculum neutrophilum (strain DSM 2338 / JCM 9278 / NBRC 100436 / V24Sta) (Thermoproteus neutrophilus).